The sequence spans 455 residues: O-acyltransferase pigD (455 aa).

Belongs to the trichothecene 3-O-acetyltransferase family.

The protein operates within secondary metabolite biosynthesis. Its function is as follows. O-acetyltransferase; part of the gene cluster that mediates the biosynthesis of azaphilone pigments (MonAzPs), a complex mixture of compounds with a common azaphilone skeleton very widely used as food colorants. Within the pathway, pigD directly transfers the fatty acyl chain from the beta-ketoacyl-ACP produced by the pigJ-pigK fatty acid synthase (FAS) to the C-4 alcohol. The first step of the pathway is performed by the nrPKS pigA that forms the hexaketide precursor from successive condensations of five malonyl-CoA units, with a simple acetyl-CoA starter unit. The role of esterase pigG is not clear, but it may play at most a supplementary role in the formation of the benzaldehyde produced by the pigA nrPKS. This very reactive benzaldehyde is intercepted by the pigC ketoreductase that to provide the first stable enzyme-free MonAzPs intermediate, 6-(4-hydroxy-2-oxopentyl)-3-methyl-2,4-dioxocyclohexane carbaldehyde, also known as M7PKS-1. The FAD-dependent monooxygenase pigN hydroxylates M7PKS-1 at C-4, which triggers the formation of the pyran ring. PigJ, pigK and pigD are involved in the acetylation of the pyran ring. PigJ and pigK form the two subunits of a dedicated fungal FAS that produces the side chain fatty acyl moiety of MonAzPs and pigD transfers the fatty acyl chain to the C-4 alcohol. PigM and pigO are involved in the elimination of the omega-1 alcohol. PigM acts as an O-acetyltransferase that synthesizes the putative O-11 acetyl intermediate whereas pigO eliminates acetic acid to yield an intermediate with a C10(11) double bond. The dehydration of the C-11 alcohol followed by the reduction of the C6(7) double bond by the NAD(P)H-dependent oxidoreductase pigE increases the electrophilicity of the C-5 ketone of the resulting acyl benzopyran. This in turn sets up the C-5 ketone for an intramolecular Knoevenagel aldol condensation with the C-20 enol of the side chain. This condensation affords the characteristic linear tricyclic carbon skeletons of the yellow pigments that serve as the common precursors for the classical yellow pigments monascin and ankaflavin, orange pigments rubopunctatin and monascorubrin, and red pigments ribropunctamine and monascorubramine. The FAD-dependent oxidoreductase pigF is especially invoved in the biosynthesis of orange and red pigments via desaturation of C6(7). The polypeptide is O-acyltransferase pigD (Monascus ruber (Mold)).